Here is a 290-residue protein sequence, read N- to C-terminus: Membrane-spanning 4-domains subfamily A member 8 (290 aa).

Positions 1 to 21 (MNRPTAQGAVNLSGSKFSTAK) are enriched in polar residues. Residues 1–25 (MNRPTAQGAVNLSGSKFSTAKSWEP) form a disordered region. Over 1–108 (MNRPTAQGAV…PAQRVLKKGQ (108 aa)) the chain is Cytoplasmic. Residues 109 to 129 (VLGAIQILIGLVHIGLGSIMI) form a helical membrane-spanning segment. Over 130 to 138 (TNLFSHYTP) the chain is Extracellular. A helical transmembrane segment spans residues 139 to 159 (VSLYGGFPFWGGIWFIISGSL). Residues 160–174 (SVAAETQPNSPCLLN) are Cytoplasmic-facing. Residues 175–195 (GSVGLNIFSAICSAVGIMLFI) form a helical membrane-spanning segment. Over 196–220 (TDISISSGYIYPSYYPYQENLGVRT) the chain is Extracellular. Residues 221–241 (GVAISSVLLIFCLLELSIASV) traverse the membrane as a helical segment. The Cytoplasmic portion of the chain corresponds to 242–290 (SSHFGCQVACCHYNNPGVVIPNVYAANPVVIPEPPNPIPSYSEVVQDSR).

The protein belongs to the MS4A family. In terms of tissue distribution, expressed strongly in intestine and colon and minimally in lung and ovary.

It localises to the membrane. In terms of biological role, may be involved in signal transduction as a component of a multimeric receptor complex. This Mus musculus (Mouse) protein is Membrane-spanning 4-domains subfamily A member 8 (Ms4a8).